The following is a 1747-amino-acid chain: Retroelement silencing factor 1 (1747 aa).

Residue Lys-216 forms a Glycyl lysine isopeptide (Lys-Gly) (interchain with G-Cter in SUMO2) linkage. At Ser-221 the chain carries Phosphoserine. Residues 261 to 272 (TSAVPSQQYATQ) show a composition bias toward polar residues. The tract at residues 261–280 (TSAVPSQQYATQTDKRPPPP) is disordered. Lys-707 participates in a covalent cross-link: Glycyl lysine isopeptide (Lys-Gly) (interchain with G-Cter in SUMO2). Disordered stretches follow at residues 833–856 (PLTQ…NVNQ), 923–956 (PQKP…GFQK), and 1073–1101 (EGSV…KDPA). A compositionally biased stretch (polar residues) spans 842–856 (ESTNGNSEVTPNVNQ). The span at 937 to 956 (REPEKQLDNTTENKDFGFQK) shows a compositional bias: basic and acidic residues. The segment covering 1073–1087 (EGSVGQQTTYQTSED) has biased composition (polar residues). Positions 1089-1101 (TADKTSSDSKDPA) are enriched in basic and acidic residues. Lys-1136 participates in a covalent cross-link: Glycyl lysine isopeptide (Lys-Gly) (interchain with G-Cter in SUMO2). Residue Ser-1145 is modified to Phosphoserine. The tract at residues 1200 to 1274 (EEKQKEQCSP…KSLPRTEQEL (75 aa)) is disordered. Over residues 1217–1226 (QGERTSDRDV) the composition is skewed to basic and acidic residues. Thr-1240 carries the phosphothreonine modification. Residues 1242–1261 (PDGKSHFPELQDDSRKDTPK) are compositionally biased toward basic and acidic residues. The residue at position 1358 (Ser-1358) is a Phosphoserine. Glycyl lysine isopeptide (Lys-Gly) (interchain with G-Cter in SUMO2) cross-links involve residues Lys-1528 and Lys-1636. Residues 1686–1716 (KRTQKDSQERDNVNSRLSKRSFSADGFEMLQ) form a disordered region. The segment covering 1689–1698 (QKDSQERDNV) has biased composition (basic and acidic residues). Ser-1708 bears the Phosphoserine mark. Lys-1723 participates in a covalent cross-link: Glycyl lysine isopeptide (Lys-Gly) (interchain with G-Cter in SUMO2). Phosphoserine is present on Ser-1740.

As to quaternary structure, interacts with SETDB1.

Its subcellular location is the nucleus. Functionally, plays a role in the regulation of imprinted gene expression, regulates repressive epigenetic modifications associated with SETDB1. Required for the recruitment or accumulation of SETDB1 to the endogenous retroviruses (ERVs) and maintenance of repressive chromatin configuration, contributing to a subset of the SETDB1-dependent ERV silencing in embryonic stem cells. This Homo sapiens (Human) protein is Retroelement silencing factor 1.